The primary structure comprises 391 residues: Phosphoglycerate kinase (391 aa).

Residues 21–23 (DLN), Arg36, 59–62 (HLGR), Arg113, and Arg146 contribute to the substrate site. Residues Lys197, Glu319, and 345–348 (GGDT) contribute to the ATP site.

Belongs to the phosphoglycerate kinase family. In terms of assembly, monomer.

It localises to the cytoplasm. It catalyses the reaction (2R)-3-phosphoglycerate + ATP = (2R)-3-phospho-glyceroyl phosphate + ADP. It participates in carbohydrate degradation; glycolysis; pyruvate from D-glyceraldehyde 3-phosphate: step 2/5. In Xanthomonas campestris pv. campestris (strain 8004), this protein is Phosphoglycerate kinase.